A 382-amino-acid polypeptide reads, in one-letter code: PPE family protein PPE44 (382 aa).

Belongs to the mycobacterial PPE family.

It is found in the secreted. Its subcellular location is the cell wall. It localises to the cell surface. Virulence factor that modulates host innate immune response. This Mycobacterium tuberculosis (strain CDC 1551 / Oshkosh) protein is PPE family protein PPE44.